A 367-amino-acid chain; its full sequence is Phosphoribosylaminoimidazole-succinocarboxamide synthase (367 aa).

The protein belongs to the SAICAR synthetase family.

The catalysed reaction is 5-amino-1-(5-phospho-D-ribosyl)imidazole-4-carboxylate + L-aspartate + ATP = (2S)-2-[5-amino-1-(5-phospho-beta-D-ribosyl)imidazole-4-carboxamido]succinate + ADP + phosphate + 2 H(+). Its pathway is purine metabolism; IMP biosynthesis via de novo pathway; 5-amino-1-(5-phospho-D-ribosyl)imidazole-4-carboxamide from 5-amino-1-(5-phospho-D-ribosyl)imidazole-4-carboxylate: step 1/2. This chain is Phosphoribosylaminoimidazole-succinocarboxamide synthase, found in Aeromonas salmonicida (strain A449).